Here is a 521-residue protein sequence, read N- to C-terminus: Membrane-bound transcription factor site-2 protease (521 aa).

Over 1–3 (MIP) the chain is Cytoplasmic. Residues 4–24 (VSLVVVVVGGWTVVYLTDLVL) form a helical membrane-spanning segment. Topologically, residues 25–74 (KSSVYFKHSYEDWLESNGLSISPFHIRWQTAVFNRAFYSWGRRKARMLYQ) are lumenal. 2 helical membrane-spanning segments follow: residues 75-95 (WFNF…FLLG) and 96-107 (KTLMQTLAQMMA). The Lumenal segment spans residues 108–146 (DSPSSYSSSSSSSSSSSSSSSSSSSSSSSSSLHNEQVLQ). The disordered stretch occupies residues 113–137 (YSSSSSSSSSSSSSSSSSSSSSSSS). The helical transmembrane segment at 147–171 (VVVPGINLPVNQLTYFFAAVLISGV) threads the bilayer. His173 is a binding site for Zn(2+). The active site involves Glu174. A run of 3 helical transmembrane segments spans residues 176–188 (GHGI…QVRF), 189–211 (NGFG…TTHL), and 231–253 (FVLA…PFYY). His177 serves as a coordination point for Zn(2+). Over 254-448 (TGVGVLITEV…LPVVVETFVK (195 aa)) the chain is Lumenal. Asn339 is a glycosylation site (N-linked (GlcNAc...) asparagine). Helical transmembrane passes span 449 to 466 (YLIS…VPCF) and 467 to 478 (ALDGQWILNSFL). Residues 479-494 (DATLTSVIGDNDVKDL) lie on the Lumenal side of the membrane. Residues 495–515 (IGFFILLGGSVLLAANVTLGL) traverse the membrane as a helical segment. Over 516-521 (WMVTAR) the chain is Cytoplasmic.

It belongs to the peptidase M50A family. Zn(2+) is required as a cofactor.

It is found in the membrane. The protein resides in the cytoplasm. Its subcellular location is the golgi apparatus membrane. The catalysed reaction is Cleaves several transcription factors that are type-2 transmembrane proteins within membrane-spanning domains. Known substrates include sterol regulatory element-binding protein (SREBP) -1, SREBP-2 and forms of the transcriptional activator ATF6. SREBP-2 is cleaved at the site 477-DRSRILL-|-CVLTFLCLSFNPLTSLLQWGGA-505. The residues Asn-Pro, 11 residues distal to the site of cleavage in the membrane-spanning domain, are important for cleavage by S2P endopeptidase. Replacement of either of these residues does not prevent cleavage, but there is no cleavage if both of these residues are replaced.. Zinc metalloprotease that mediates intramembrane proteolysis of proteins such as ATF6, ATF6B, SREBF1/SREBP1 and SREBF2/SREBP2. Catalyzes the second step in the proteolytic activation of the sterol regulatory element-binding proteins (SREBPs) SREBF1/SREBP1 and SREBF2/SREBP2: cleaves SREBPs within the first transmembrane segment, thereby releasing the N-terminal segment with a portion of the transmembrane segment attached. Mature N-terminal SREBP fragments shuttle to the nucleus and activate gene transcription. Also mediates the second step in the proteolytic activation of the cyclic AMP-dependent transcription factor ATF-6 (ATF6 and ATF6B). Involved in intramembrane proteolysis during bone formation. In astrocytes and osteoblasts, upon DNA damage and ER stress, mediates the second step of the regulated intramembrane proteolytic activation of the transcription factor CREB3L1, leading to the inhibition of cell-cycle progression. This Pongo abelii (Sumatran orangutan) protein is Membrane-bound transcription factor site-2 protease (MBTPS2).